The primary structure comprises 217 residues: Thymidylate kinase (217 aa).

An ATP-binding site is contributed by 7–14 (GIEGTGKT).

Belongs to the thymidylate kinase family.

It catalyses the reaction dTMP + ATP = dTDP + ADP. Functionally, phosphorylation of dTMP to form dTDP in both de novo and salvage pathways of dTTP synthesis. This chain is Thymidylate kinase, found in Maridesulfovibrio salexigens (strain ATCC 14822 / DSM 2638 / NCIMB 8403 / VKM B-1763) (Desulfovibrio salexigens).